The primary structure comprises 75 residues: uncharacterized protein (75 aa).

This is an uncharacterized protein from Escherichia coli O6:H1 (strain CFT073 / ATCC 700928 / UPEC).